We begin with the raw amino-acid sequence, 240 residues long: Large ribosomal subunit protein bL25 (240 aa).

Disordered regions lie at residues 1–20 (MAEN…GPAR) and 204–240 (GAAP…KAKK). Residues 204 to 229 (GAAPAAGAAAPAGGAAPAAGAAPAKG) are compositionally biased toward low complexity. The segment covering 230-240 (GEAKGGDKAKK) has biased composition (basic and acidic residues).

Belongs to the bacterial ribosomal protein bL25 family. CTC subfamily. As to quaternary structure, part of the 50S ribosomal subunit; part of the 5S rRNA/L5/L18/L25 subcomplex. Contacts the 5S rRNA. Binds to the 5S rRNA independently of L5 and L18.

In terms of biological role, this is one of the proteins that binds to the 5S RNA in the ribosome where it forms part of the central protuberance. The polypeptide is Large ribosomal subunit protein bL25 (Anaeromyxobacter sp. (strain K)).